We begin with the raw amino-acid sequence, 448 residues long: UDP-N-acetylmuramoylalanine--D-glutamate ligase (448 aa).

An ATP-binding site is contributed by 116 to 122 (GSNAKST).

Belongs to the MurCDEF family.

It localises to the cytoplasm. It catalyses the reaction UDP-N-acetyl-alpha-D-muramoyl-L-alanine + D-glutamate + ATP = UDP-N-acetyl-alpha-D-muramoyl-L-alanyl-D-glutamate + ADP + phosphate + H(+). It functions in the pathway cell wall biogenesis; peptidoglycan biosynthesis. Functionally, cell wall formation. Catalyzes the addition of glutamate to the nucleotide precursor UDP-N-acetylmuramoyl-L-alanine (UMA). The chain is UDP-N-acetylmuramoylalanine--D-glutamate ligase from Pseudomonas fluorescens (strain Pf0-1).